A 431-amino-acid polypeptide reads, in one-letter code: Glucose-1-phosphate adenylyltransferase (431 aa).

A beta-D-fructose 1,6-bisphosphate-binding site is contributed by Lys-39. AMP-binding residues include Arg-40, His-46, and Arg-52. Tyr-114 contributes to the alpha-D-glucose 1-phosphate binding site. Residue Arg-130 coordinates AMP. Residues Gly-179, 194-195, and Ser-212 each bind alpha-D-glucose 1-phosphate; that span reads EK. Arg-386 lines the AMP pocket. Residues 419-423 and 429-431 contribute to the beta-D-fructose 1,6-bisphosphate site; these read REMLR and QER.

Belongs to the bacterial/plant glucose-1-phosphate adenylyltransferase family. As to quaternary structure, homotetramer.

The enzyme catalyses alpha-D-glucose 1-phosphate + ATP + H(+) = ADP-alpha-D-glucose + diphosphate. The protein operates within glycan biosynthesis; glycogen biosynthesis. Its activity is regulated as follows. Allosterically activated by fructose-1,6-bisphosphate (F16BP) and inhibited by AMP. Functionally, involved in the biosynthesis of ADP-glucose, a building block required for the elongation reactions to produce glycogen. Catalyzes the reaction between ATP and alpha-D-glucose 1-phosphate (G1P) to produce pyrophosphate and ADP-Glc. The chain is Glucose-1-phosphate adenylyltransferase from Enterobacter sp. (strain 638).